The primary structure comprises 92 residues: uncharacterized protein (92 aa).

The next 3 helical transmembrane spans lie at 1-21 (MEVL…GVIL), 29-49 (IIML…CYYL), and 51-71 (IAIV…LGYL).

It localises to the cell membrane. This is an uncharacterized protein from Methanocaldococcus jannaschii (strain ATCC 43067 / DSM 2661 / JAL-1 / JCM 10045 / NBRC 100440) (Methanococcus jannaschii).